Consider the following 319-residue polypeptide: Protoheme IX farnesyltransferase (319 aa).

The next 8 membrane-spanning stretches (helical) occupy residues 59-79 (IGLI…AGAF), 108-128 (EALV…WFGA), 131-151 (LSAW…TIIL), 158-178 (NIVW…AAVT), 183-203 (WPAI…YWPL), 232-252 (VVLY…AGGA), 254-274 (WVYT…SHAL), and 299-319 (LTLL…VIGG).

Belongs to the UbiA prenyltransferase family. Protoheme IX farnesyltransferase subfamily.

The protein localises to the cell membrane. It carries out the reaction heme b + (2E,6E)-farnesyl diphosphate + H2O = Fe(II)-heme o + diphosphate. It functions in the pathway porphyrin-containing compound metabolism; heme O biosynthesis; heme O from protoheme: step 1/1. In terms of biological role, converts heme B (protoheme IX) to heme O by substitution of the vinyl group on carbon 2 of heme B porphyrin ring with a hydroxyethyl farnesyl side group. This chain is Protoheme IX farnesyltransferase, found in Pseudarthrobacter chlorophenolicus (strain ATCC 700700 / DSM 12829 / CIP 107037 / JCM 12360 / KCTC 9906 / NCIMB 13794 / A6) (Arthrobacter chlorophenolicus).